The chain runs to 675 residues: Vitamin K-dependent protein S (675 aa).

The first 24 residues, 1–24, serve as a signal peptide directing secretion; that stretch reads MRVLSVRFRVLLACLALVLPNSET. Positions 25 to 41 are excised as a propeptide; sequence NFLSKERASQVLVRKRR. The Gla domain maps to 42 to 87; it reads ANTLLEETKKGNLERECIEELCNKEEAREVFENNPETDYFYPKYLG. 4-carboxyglutamate is present on residues Glu-47, Glu-48, Glu-55, Glu-57, Glu-60, Glu-61, Glu-66, Glu-67, Glu-70, Glu-73, and Glu-77. A disulfide bridge connects residues Cys-58 and Cys-63. Residues 88–116 form a thrombin-sensitive region; the sequence is CLGAFRVGAFSAARQSANAYPDLRSCVNA. The EGF-like 1 domain maps to 117-155; the sequence is IPDQCDPMPCNEDGYLSCKDGQGAFTCICKPGWQGDKCQ. Disulfide bonds link Cys-121–Cys-134, Cys-126–Cys-143, Cys-145–Cys-154, Cys-161–Cys-175, Cys-171–Cys-184, Cys-186–Cys-199, Cys-205–Cys-217, Cys-212–Cys-226, Cys-228–Cys-241, Cys-247–Cys-256, Cys-252–Cys-265, Cys-267–Cys-282, and Cys-449–Cys-475. Asp-136 is modified ((3R)-3-hydroxyaspartate). The region spanning 157 to 200 is the EGF-like 2; calcium-binding domain; sequence DINECKDPSNINGGCSQTCDNTPGSYHCSCKIGFAMLTNKKDCK. The region spanning 201 to 242 is the EGF-like 3; calcium-binding domain; sequence DVDECSLKPSVCGTAVCKNIPGDFECECPNGYRYDPSSKSCK. The 41-residue stretch at 243–283 folds into the EGF-like 4; calcium-binding domain; that stretch reads DVDECSENTCAQLCVNYPGGYSCYCDGKKGFKLAQDQRSCE. Laminin G-like domains lie at 299-475 and 484-665; these read LLYL…NKHC and YYPG…AHSC. Asn-499 and Asn-509 each carry an N-linked (GlcNAc...) asparagine glycan.

The iron and 2-oxoglutarate dependent 3-hydroxylation of aspartate and asparagine is (R) stereospecific within EGF domains. In terms of tissue distribution, plasma.

Its subcellular location is the secreted. Functionally, anticoagulant plasma protein; it is a cofactor to activated protein C in the degradation of coagulation factors Va and VIIIa. It helps to prevent coagulation and stimulating fibrinolysis. This Rattus norvegicus (Rat) protein is Vitamin K-dependent protein S (Pros1).